A 97-amino-acid polypeptide reads, in one-letter code: Large ribosomal subunit protein eL21 (97 aa).

This sequence belongs to the eukaryotic ribosomal protein eL21 family.

This chain is Large ribosomal subunit protein eL21, found in Methanosarcina barkeri (strain Fusaro / DSM 804).